Here is a 643-residue protein sequence, read N- to C-terminus: Carboxy-terminal kinesin 2 (643 aa).

Disordered regions lie at residues M1–E42 and M81–V101. Positions M1–K116 are globular. The span at P88–V101 shows a compositional bias: polar residues. Residues K117 to R296 adopt a coiled-coil conformation. In terms of domain architecture, Kinesin motor spans N294–C633. ATP is bound at residue G386–T393.

Belongs to the TRAFAC class myosin-kinesin ATPase superfamily. Kinesin family. NCD subfamily.

It is found in the cytoplasm. It localises to the cytoskeleton. Functionally, promotes mitotic spindle assembly. The sequence is that of Carboxy-terminal kinesin 2 from Xenopus laevis (African clawed frog).